Reading from the N-terminus, the 52-residue chain is Keratin-associated protein 19-2 (52 aa).

Belongs to the KRTAP type 19 family. As to quaternary structure, interacts with hair keratins.

Functionally, in the hair cortex, hair keratin intermediate filaments are embedded in an interfilamentous matrix, consisting of hair keratin-associated proteins (KRTAP), which are essential for the formation of a rigid and resistant hair shaft through their extensive disulfide bond cross-linking with abundant cysteine residues of hair keratins. The matrix proteins include the high-sulfur and high-glycine-tyrosine keratins. The polypeptide is Keratin-associated protein 19-2 (KRTAP19-2) (Homo sapiens (Human)).